Here is a 218-residue protein sequence, read N- to C-terminus: Chromophore lyase CpcT/CpeT 1 (218 aa).

Belongs to the CpcT/CpeT biliprotein lyase family.

Its function is as follows. Covalently attaches a chromophore to Cys residue(s) of phycobiliproteins. The polypeptide is Chromophore lyase CpcT/CpeT 1 (Synechococcus sp. (strain JA-3-3Ab) (Cyanobacteria bacterium Yellowstone A-Prime)).